A 91-amino-acid polypeptide reads, in one-letter code: MSRTIFCTFLQREAEGQDFQLYPGELGKRIYNEISKEAWAQWQHKQTMLINEKKLNMMNVEHRKLLEQEMINFLFEGKDVHIEGYTPEEKK.

This sequence belongs to the Fe(2+)-trafficking protein family. Monomer.

Functionally, could be a mediator in iron transactions between iron acquisition and iron-requiring processes, such as synthesis and/or repair of Fe-S clusters in biosynthetic enzymes. This Citrobacter koseri (strain ATCC BAA-895 / CDC 4225-83 / SGSC4696) protein is Probable Fe(2+)-trafficking protein.